The following is a 98-amino-acid chain: NADH-ubiquinone oxidoreductase chain 4L (98 aa).

Helical transmembrane passes span 1-21 (MPFI…GLLI), 29-49 (SLLC…TMTL), and 61-81 (IILL…LILI).

Belongs to the complex I subunit 4L family. Core subunit of respiratory chain NADH dehydrogenase (Complex I) which is composed of 45 different subunits.

The protein resides in the mitochondrion inner membrane. The enzyme catalyses a ubiquinone + NADH + 5 H(+)(in) = a ubiquinol + NAD(+) + 4 H(+)(out). Core subunit of the mitochondrial membrane respiratory chain NADH dehydrogenase (Complex I) which catalyzes electron transfer from NADH through the respiratory chain, using ubiquinone as an electron acceptor. Part of the enzyme membrane arm which is embedded in the lipid bilayer and involved in proton translocation. The sequence is that of NADH-ubiquinone oxidoreductase chain 4L (MT-ND4L) from Cebus albifrons (White-fronted capuchin).